Here is a 291-residue protein sequence, read N- to C-terminus: MTQDSYLVGLIGSGIGPSLSPALHEREAGRQGLRYHYRLIDIDRLGVGPEAVGGLVRAARDLGFDGLNITHPCKQLVISHLDTLAPQAEALGAVNTVVFEDGRAVGHNTDVTGFAASFARGLPDARLERVVQLGAGGAGAAVAHALLTLGAGHVTVVDALPERAAALAVALNRHFGDGRAAAASPDTLPKLLTDADGIVHATPTGMAAHPGIPLPAELLHPGLWVAEVVYRPLETELLRTARALGCATLDGGGMAVFQAVDAFRLFTGREPDSMRMLADIAELAGTAAVRH.

Shikimate-binding positions include 18–20 (SLS) and Thr-70. Lys-74 acts as the Proton acceptor in catalysis. Residues Asn-95 and Asp-110 each coordinate shikimate. Residues 134-138 (GAGGA) and Val-228 contribute to the NADP(+) site. Residue Tyr-230 coordinates shikimate. Gly-251 is an NADP(+) binding site.

This sequence belongs to the shikimate dehydrogenase family. As to quaternary structure, homodimer.

The enzyme catalyses shikimate + NADP(+) = 3-dehydroshikimate + NADPH + H(+). It participates in metabolic intermediate biosynthesis; chorismate biosynthesis; chorismate from D-erythrose 4-phosphate and phosphoenolpyruvate: step 4/7. Involved in the biosynthesis of the chorismate, which leads to the biosynthesis of aromatic amino acids. Catalyzes the reversible NADPH linked reduction of 3-dehydroshikimate (DHSA) to yield shikimate (SA). The chain is Shikimate dehydrogenase (NADP(+)) from Streptomyces avermitilis (strain ATCC 31267 / DSM 46492 / JCM 5070 / NBRC 14893 / NCIMB 12804 / NRRL 8165 / MA-4680).